Here is a 131-residue protein sequence, read N- to C-terminus: Small ribosomal subunit protein uS9 (131 aa).

The protein belongs to the universal ribosomal protein uS9 family.

The chain is Small ribosomal subunit protein uS9 from Haemophilus ducreyi (strain 35000HP / ATCC 700724).